The chain runs to 37 residues: Large ribosomal subunit protein bL36c (37 aa).

This sequence belongs to the bacterial ribosomal protein bL36 family.

It localises to the plastid. The protein resides in the chloroplast. This Lolium perenne (Perennial ryegrass) protein is Large ribosomal subunit protein bL36c.